Here is a 79-residue protein sequence, read N- to C-terminus: MKKLFAEFFGTYWLVFGGCGSAVFAAGYPTLGIGFAGVALAFGLTVLTMAYAVGHISGGHFNPAVSFGLWAGGRFSAKD.

The next 2 membrane-spanning stretches (helical) occupy residues 4–24 (LFAE…SAVF) and 33–53 (IGFA…AYAV). The NPA 1 motif lies at 62–64 (NPA).

It belongs to the MIP/aquaporin (TC 1.A.8) family. Homotetramer.

The protein resides in the cell membrane. The enzyme catalyses H2O(in) = H2O(out). Its function is as follows. Channel that permits osmotically driven movement of water in both directions. It is involved in the osmoregulation and in the maintenance of cell turgor during volume expansion in rapidly growing cells. It mediates rapid entry or exit of water in response to abrupt changes in osmolarity. This chain is Aquaporin Z, found in Flavobacterium johnsoniae (Cytophaga johnsonae).